The primary structure comprises 201 residues: Endoribonuclease YbeY (201 aa).

Zn(2+) contacts are provided by H156, H160, and H166.

Belongs to the endoribonuclease YbeY family. It depends on Zn(2+) as a cofactor.

It is found in the cytoplasm. Its function is as follows. Single strand-specific metallo-endoribonuclease involved in late-stage 70S ribosome quality control and in maturation of the 3' terminus of the 16S rRNA. The chain is Endoribonuclease YbeY from Cupriavidus pinatubonensis (strain JMP 134 / LMG 1197) (Cupriavidus necator (strain JMP 134)).